Reading from the N-terminus, the 638-residue chain is Zinc finger and BTB domain-containing protein 22 (638 aa).

In terms of domain architecture, BTB spans Cys-57–Ala-121. Disordered regions lie at residues Cys-171–Gln-223, Ser-229–Val-248, Asp-335–Glu-354, and Glu-367–Val-451. Over residues Ser-189–Phe-210 the composition is skewed to polar residues. Ser-203 carries the post-translational modification Phosphoserine. The segment at Phe-483–His-504 adopts a C2H2-type 1; atypical zinc-finger fold. 2 consecutive C2H2-type zinc fingers follow at residues Phe-510–His-532 and Tyr-538–His-559. The interval His-564–His-638 is disordered.

Belongs to the krueppel C2H2-type zinc-finger protein family.

The protein resides in the nucleus. Its function is as follows. May be involved in transcriptional regulation. This chain is Zinc finger and BTB domain-containing protein 22 (Zbtb22), found in Mus musculus (Mouse).